The chain runs to 130 residues: Small ribosomal subunit protein uS11c (130 aa).

It belongs to the universal ribosomal protein uS11 family. As to quaternary structure, part of the 30S ribosomal subunit.

The protein localises to the plastid. It localises to the chloroplast. This is Small ribosomal subunit protein uS11c from Mesostigma viride (Green alga).